Consider the following 341-residue polypeptide: Anthranilate phosphoribosyltransferase (341 aa).

Residues glycine 79, 82–83 (GD), threonine 87, 89–92 (NIST), 107–115 (KHGNRAASS), and alanine 119 contribute to the 5-phospho-alpha-D-ribose 1-diphosphate site. Residue glycine 79 participates in anthranilate binding. Serine 91 lines the Mg(2+) pocket. Anthranilate is bound at residue asparagine 110. Arginine 165 is an anthranilate binding site. Residues aspartate 224 and glutamate 225 each coordinate Mg(2+).

Belongs to the anthranilate phosphoribosyltransferase family. Homodimer. Requires Mg(2+) as cofactor.

The enzyme catalyses N-(5-phospho-beta-D-ribosyl)anthranilate + diphosphate = 5-phospho-alpha-D-ribose 1-diphosphate + anthranilate. Its pathway is amino-acid biosynthesis; L-tryptophan biosynthesis; L-tryptophan from chorismate: step 2/5. Functionally, catalyzes the transfer of the phosphoribosyl group of 5-phosphorylribose-1-pyrophosphate (PRPP) to anthranilate to yield N-(5'-phosphoribosyl)-anthranilate (PRA). This Lacticaseibacillus paracasei (strain ATCC 334 / BCRC 17002 / CCUG 31169 / CIP 107868 / KCTC 3260 / NRRL B-441) (Lactobacillus paracasei) protein is Anthranilate phosphoribosyltransferase.